Consider the following 364-residue polypeptide: tRNA 2-selenouridine synthase (364 aa).

One can recognise a Rhodanese domain in the interval 14-137 (LLADTPLIDV…LRQTAIQATW (124 aa)). Cys-97 (S-selanylcysteine intermediate) is an active-site residue.

This sequence belongs to the SelU family. Monomer.

It catalyses the reaction 5-methylaminomethyl-2-thiouridine(34) in tRNA + selenophosphate + (2E)-geranyl diphosphate + H2O + H(+) = 5-methylaminomethyl-2-selenouridine(34) in tRNA + (2E)-thiogeraniol + phosphate + diphosphate. It carries out the reaction 5-methylaminomethyl-2-thiouridine(34) in tRNA + (2E)-geranyl diphosphate = 5-methylaminomethyl-S-(2E)-geranyl-thiouridine(34) in tRNA + diphosphate. The enzyme catalyses 5-methylaminomethyl-S-(2E)-geranyl-thiouridine(34) in tRNA + selenophosphate + H(+) = 5-methylaminomethyl-2-(Se-phospho)selenouridine(34) in tRNA + (2E)-thiogeraniol. The catalysed reaction is 5-methylaminomethyl-2-(Se-phospho)selenouridine(34) in tRNA + H2O = 5-methylaminomethyl-2-selenouridine(34) in tRNA + phosphate. Involved in the post-transcriptional modification of the uridine at the wobble position (U34) of tRNA(Lys), tRNA(Glu) and tRNA(Gln). Catalyzes the conversion of 2-thiouridine (S2U-RNA) to 2-selenouridine (Se2U-RNA). Acts in a two-step process involving geranylation of 2-thiouridine (S2U) to S-geranyl-2-thiouridine (geS2U) and subsequent selenation of the latter derivative to 2-selenouridine (Se2U) in the tRNA chain. The chain is tRNA 2-selenouridine synthase from Salmonella gallinarum (strain 287/91 / NCTC 13346).